We begin with the raw amino-acid sequence, 472 residues long: Eukaryotic translation initiation factor 2 subunit 3 (472 aa).

Ala2 is modified (N-acetylalanine). Ser16 carries the phosphoserine modification. The tr-type G domain occupies 39–248 (QATINIGTIG…IVKKIPVPPR (210 aa)). The tract at residues 48–55 (GHVAHGKS) is G1. Position 51–56 (51–56 (AHGKST)) interacts with GTP. Positions 76 to 80 (NITIK) are G2. The segment at 134–137 (DCPG) is G3. GTP-binding positions include 190–193 (NKID) and 225–227 (SAQ). The segment at 190–193 (NKID) is G4. The interval 225–227 (SAQ) is G5. Residues 457–469 (GQIRRGVTIKPTV) form an interacts with CDC123 region.

It belongs to the TRAFAC class translation factor GTPase superfamily. Classic translation factor GTPase family. EIF2G subfamily. In terms of assembly, eukaryotic translation initiation factor 2 eIF2 is a heterotrimeric complex composed of an alpha (EIF2S1), a beta (EIF2S2) and a gamma (EIF2S3) chain. eIF2 is member of the 43S pre-initiation complex (43S PIC). Interacts (via C-terminus) with CDC123; the interaction is direct.

Its subcellular location is the cytoplasm. It localises to the cytosol. The enzyme catalyses GTP + H2O = GDP + phosphate + H(+). Member of the eIF2 complex that functions in the early steps of protein synthesis by forming a ternary complex with GTP and initiator tRNA. This complex binds to a 40S ribosomal subunit, followed by mRNA binding to form the 43S pre-initiation complex (43S PIC). Junction of the 60S ribosomal subunit to form the 80S initiation complex is preceded by hydrolysis of the GTP bound to eIF2 and release of an eIF2-GDP binary complex. In order for eIF2 to recycle and catalyze another round of initiation, the GDP bound to eIF2 must exchange with GTP by way of a reaction catalyzed by eIF-2B. The sequence is that of Eukaryotic translation initiation factor 2 subunit 3 (EIF2S3) from Sus scrofa (Pig).